Consider the following 359-residue polypeptide: 4-hydroxy-3-methylbut-2-en-1-yl diphosphate synthase (flavodoxin) (359 aa).

[4Fe-4S] cluster contacts are provided by Cys265, Cys268, Cys300, and Glu307.

The protein belongs to the IspG family. It depends on [4Fe-4S] cluster as a cofactor.

It catalyses the reaction (2E)-4-hydroxy-3-methylbut-2-enyl diphosphate + oxidized [flavodoxin] + H2O + 2 H(+) = 2-C-methyl-D-erythritol 2,4-cyclic diphosphate + reduced [flavodoxin]. It participates in isoprenoid biosynthesis; isopentenyl diphosphate biosynthesis via DXP pathway; isopentenyl diphosphate from 1-deoxy-D-xylulose 5-phosphate: step 5/6. Converts 2C-methyl-D-erythritol 2,4-cyclodiphosphate (ME-2,4cPP) into 1-hydroxy-2-methyl-2-(E)-butenyl 4-diphosphate. This is 4-hydroxy-3-methylbut-2-en-1-yl diphosphate synthase (flavodoxin) from Lawsonia intracellularis (strain PHE/MN1-00).